Reading from the N-terminus, the 100-residue chain is Large ribosomal subunit protein uL23 (100 aa).

Belongs to the universal ribosomal protein uL23 family. In terms of assembly, part of the 50S ribosomal subunit. Contacts protein L29, and trigger factor when it is bound to the ribosome.

In terms of biological role, one of the early assembly proteins it binds 23S rRNA. One of the proteins that surrounds the polypeptide exit tunnel on the outside of the ribosome. Forms the main docking site for trigger factor binding to the ribosome. The chain is Large ribosomal subunit protein uL23 from Shewanella amazonensis (strain ATCC BAA-1098 / SB2B).